The following is a 336-amino-acid chain: Glycerol-3-phosphate dehydrogenase [NAD(P)+] (336 aa).

Positions 14, 15, 35, 36, and 109 each coordinate NADPH. 2 residues coordinate sn-glycerol 3-phosphate: lysine 109 and glycine 139. Position 143 (alanine 143) interacts with NADPH. Residues lysine 194, aspartate 247, serine 257, arginine 258, and asparagine 259 each contribute to the sn-glycerol 3-phosphate site. Lysine 194 functions as the Proton acceptor in the catalytic mechanism. An NADPH-binding site is contributed by arginine 258. An NADPH-binding site is contributed by glutamate 284.

It belongs to the NAD-dependent glycerol-3-phosphate dehydrogenase family.

It localises to the cytoplasm. It catalyses the reaction sn-glycerol 3-phosphate + NAD(+) = dihydroxyacetone phosphate + NADH + H(+). It carries out the reaction sn-glycerol 3-phosphate + NADP(+) = dihydroxyacetone phosphate + NADPH + H(+). It participates in membrane lipid metabolism; glycerophospholipid metabolism. In terms of biological role, catalyzes the reduction of the glycolytic intermediate dihydroxyacetone phosphate (DHAP) to sn-glycerol 3-phosphate (G3P), the key precursor for phospholipid synthesis. In Streptomyces avermitilis (strain ATCC 31267 / DSM 46492 / JCM 5070 / NBRC 14893 / NCIMB 12804 / NRRL 8165 / MA-4680), this protein is Glycerol-3-phosphate dehydrogenase [NAD(P)+].